A 508-amino-acid chain; its full sequence is Hydroxymethylglutaryl-CoA synthase, mitochondrial (508 aa).

The N-terminal 37 residues, methionine 1 to serine 37, are a transit peptide targeting the mitochondrion. The residue at position 52 (lysine 52) is an N6-succinyllysine. Residues glutamate 80 and alanine 81 each contribute to the (3S)-3-hydroxy-3-methylglutaryl-CoA site. 2 positions are modified to N6-acetyllysine; alternate: lysine 83 and lysine 118. Residues lysine 83 and lysine 118 each carry the N6-succinyllysine; alternate modification. Glutamate 132 serves as the catalytic Proton donor/acceptor. Residues cysteine 166, asparagine 204, and threonine 208 each contribute to the (3S)-3-hydroxy-3-methylglutaryl-CoA site. The active-site Acyl-thioester intermediate is cysteine 166. Residue lysine 221 is modified to N6-succinyllysine. Lysine 243 bears the N6-acetyllysine mark. Lysine 256 is modified (N6-acetyllysine; alternate). Lysine 256 carries the post-translational modification N6-succinyllysine; alternate. (3S)-3-hydroxy-3-methylglutaryl-CoA-binding residues include serine 258 and histidine 301. Histidine 301 acts as the Proton donor/acceptor in catalysis. Lysine 306 bears the N6-acetyllysine mark. A (3S)-3-hydroxy-3-methylglutaryl-CoA-binding site is contributed by lysine 310. Residues lysine 310 and lysine 327 each carry the N6-acetyllysine; alternate modification. N6-succinyllysine; alternate occurs at positions 310 and 327. Residue lysine 333 is modified to N6-succinyllysine. Residues lysine 342, lysine 350, lysine 354, and lysine 358 each carry the N6-acetyllysine; alternate modification. N6-succinyllysine; alternate is present on residues lysine 342, lysine 350, lysine 354, and lysine 358. (3S)-3-hydroxy-3-methylglutaryl-CoA contacts are provided by asparagine 380 and serine 414. The residue at position 427 (lysine 427) is an N6-acetyllysine. Serine 433 bears the Phosphoserine mark. Lysine 437 is subject to N6-acetyllysine. Serine 440 carries the post-translational modification Phosphoserine. At lysine 447 the chain carries N6-acetyllysine; alternate. The residue at position 447 (lysine 447) is an N6-succinyllysine; alternate. Serine 456 bears the Phosphoserine mark. Lysine 473 carries the N6-acetyllysine; alternate modification. Position 473 is an N6-succinyllysine; alternate (lysine 473). Residue serine 477 is modified to Phosphoserine.

The protein belongs to the thiolase-like superfamily. HMG-CoA synthase family. As to quaternary structure, homodimer. In terms of processing, succinylated. Desuccinylated by SIRT5. Succinylation, at least at Lys-83 and Lys-310, inhibits the enzymatic activity. In terms of tissue distribution, liver and kidney.

The protein resides in the mitochondrion. The enzyme catalyses acetoacetyl-CoA + acetyl-CoA + H2O = (3S)-3-hydroxy-3-methylglutaryl-CoA + CoA + H(+). Its pathway is metabolic intermediate biosynthesis; (R)-mevalonate biosynthesis; (R)-mevalonate from acetyl-CoA: step 2/3. Functionally, catalyzes the first irreversible step in ketogenesis, condensing acetyl-CoA to acetoacetyl-CoA to form HMG-CoA, which is converted by HMG-CoA reductase (HMGCR) into mevalonate. The protein is Hydroxymethylglutaryl-CoA synthase, mitochondrial (Hmgcs2) of Rattus norvegicus (Rat).